A 641-amino-acid chain; its full sequence is Chaperone protein HtpG (641 aa).

The segment at 1-348 (MTTATEKQTL…SNDLSLNVSR (348 aa)) is a; substrate-binding. Residues 349-565 (EILQNDKAVE…AYDMGVQMRR (217 aa)) form a b region. The tract at residues 566-641 (IMEAAGQALP…KLLLELSNAG (76 aa)) is c.

This sequence belongs to the heat shock protein 90 family. As to quaternary structure, homodimer.

It localises to the cytoplasm. In terms of biological role, molecular chaperone. Has ATPase activity. The polypeptide is Chaperone protein HtpG (Hahella chejuensis (strain KCTC 2396)).